The chain runs to 171 residues: Putative antiporter subunit mnhG2 (171 aa).

The next 3 membrane-spanning stretches (helical) occupy residues 11-31 (IAALLIFLGSIIAVISAIGIV), 51-71 (VLLTLVGVLIYFTNEQSFFSV), and 72-92 (RLLLSIVFINLTSPVGMHLVA). The segment covering 144-156 (DVQKQRQKEKQQE) has biased composition (basic and acidic residues). The segment at 144–171 (DVQKQRQKEKQQEENIESLSEARRETKD) is disordered.

Belongs to the CPA3 antiporters (TC 2.A.63) subunit G family. As to quaternary structure, may form a heterooligomeric complex that consists of seven subunits: mnhA2, mnhB2, mnhC2, mnhD2, mnhE2, mnhF2 and mnhG2.

The protein resides in the cell membrane. The chain is Putative antiporter subunit mnhG2 (mnhG2) from Staphylococcus haemolyticus (strain JCSC1435).